Here is a 472-residue protein sequence, read N- to C-terminus: Envelope glycoprotein O (472 aa).

The first 31 residues, 1–31 (MGKKEMIMVKGIPKIMLLISITFLLLSLINC), serve as a signal peptide directing secretion. N-linked (GlcNAc...) asparagine; by host glycans are attached at residues asparagine 109, asparagine 136, asparagine 163, asparagine 168, asparagine 177, asparagine 225, asparagine 248, asparagine 294, asparagine 298, asparagine 356, asparagine 391, asparagine 398, asparagine 405, asparagine 439, and asparagine 460.

Belongs to the herpesviridae U47 family. As to quaternary structure, forms the envelope trimer complex composed of gH, gL, and gO. The trimer interacts with host PDGFRA. Post-translationally, N-glycosylated. The N-terminus is blocked.

The protein localises to the virion membrane. Plays a role in viral entry into host cells. Forms a trimeric complex at the surface of the viral envelope together with gH and gL. This complex is required for entry in host fibroblasts. Mechanistically, engages host receptor(s) including PDGFRA to mediate infection. The sequence is that of Envelope glycoprotein O (UL74) from Human cytomegalovirus (strain Merlin) (HHV-5).